A 141-amino-acid polypeptide reads, in one-letter code: Hemoglobin subunit alpha (141 aa).

The region spanning 1 to 141 (VLSSTDKSNV…VSTVLTSKYR (141 aa)) is the Globin domain. At S3 the chain carries Phosphoserine. 2 positions are modified to N6-succinyllysine: K7 and K11. At K16 the chain carries N6-acetyllysine; alternate. K16 is subject to N6-succinyllysine; alternate. Y24 is subject to Phosphotyrosine. S35 carries the post-translational modification Phosphoserine. At K40 the chain carries N6-succinyllysine. Residue H58 participates in O2 binding. H87 is a binding site for heme b. Phosphoserine is present on S102. Phosphothreonine is present on T108. Phosphoserine occurs at positions 124 and 131. A phosphothreonine mark is found at T134 and T137. S138 carries the phosphoserine modification.

Belongs to the globin family. Heterotetramer of two alpha chains and two beta chains. Red blood cells.

Functionally, involved in oxygen transport from the lung to the various peripheral tissues. Hemopressin acts as an antagonist peptide of the cannabinoid receptor CNR1. Hemopressin-binding efficiently blocks cannabinoid receptor CNR1 and subsequent signaling. The sequence is that of Hemoglobin subunit alpha from Pteropus vampyrus (Large flying fox).